The primary structure comprises 502 residues: Glycerol kinase (502 aa).

Thr-14 provides a ligand contact to ADP. ATP is bound by residues Thr-14, Thr-15, and Ser-16. Thr-14 provides a ligand contact to sn-glycerol 3-phosphate. An ADP-binding site is contributed by Arg-18. 4 residues coordinate sn-glycerol 3-phosphate: Arg-84, Glu-85, Tyr-136, and Asp-246. Glycerol is bound by residues Arg-84, Glu-85, Tyr-136, Asp-246, and Gln-247. ADP is bound by residues Thr-268 and Gly-311. Residues Thr-268, Gly-311, Gln-315, and Gly-412 each coordinate ATP. ADP is bound by residues Gly-412 and Asn-416.

This sequence belongs to the FGGY kinase family. Homotetramer and homodimer (in equilibrium). Heterodimer with EIIA-Glc. Binds 1 zinc ion per glycerol kinase EIIA-Glc dimer. The zinc ion is important for dimerization.

The enzyme catalyses glycerol + ATP = sn-glycerol 3-phosphate + ADP + H(+). It participates in polyol metabolism; glycerol degradation via glycerol kinase pathway; sn-glycerol 3-phosphate from glycerol: step 1/1. Activity of this regulatory enzyme is affected by several metabolites. Allosterically and non-competitively inhibited by fructose 1,6-bisphosphate (FBP) and unphosphorylated phosphocarrier protein EIIA-Glc (III-Glc), an integral component of the bacterial phosphotransferase (PTS) system. Functionally, key enzyme in the regulation of glycerol uptake and metabolism. Catalyzes the phosphorylation of glycerol to yield sn-glycerol 3-phosphate. This chain is Glycerol kinase, found in Shigella boydii serotype 18 (strain CDC 3083-94 / BS512).